We begin with the raw amino-acid sequence, 96 residues long: Large ribosomal subunit protein bL28 (96 aa).

Belongs to the bacterial ribosomal protein bL28 family.

The protein is Large ribosomal subunit protein bL28 of Agrobacterium fabrum (strain C58 / ATCC 33970) (Agrobacterium tumefaciens (strain C58)).